Consider the following 138-residue polypeptide: Large ribosomal subunit protein uL16 (138 aa).

A compositionally biased stretch (basic residues) spans 1 to 15; sequence MLSPRKVKYRKKQRG. The segment at 1–21 is disordered; it reads MLSPRKVKYRKKQRGRLSGEA.

This sequence belongs to the universal ribosomal protein uL16 family. Part of the 50S ribosomal subunit.

Binds 23S rRNA and is also seen to make contacts with the A and possibly P site tRNAs. In Borrelia recurrentis (strain A1), this protein is Large ribosomal subunit protein uL16.